A 398-amino-acid polypeptide reads, in one-letter code: tRNA (guanine-N(7)-)-methyltransferase (398 aa).

S-adenosyl-L-methionine-binding residues include Glu124, Glu149, and Asp176. Asp232 is a substrate binding site.

Belongs to the class I-like SAM-binding methyltransferase superfamily. TrmB family.

It catalyses the reaction guanosine(46) in tRNA + S-adenosyl-L-methionine = N(7)-methylguanosine(46) in tRNA + S-adenosyl-L-homocysteine. It functions in the pathway tRNA modification; N(7)-methylguanine-tRNA biosynthesis. Functionally, catalyzes the formation of N(7)-methylguanine at position 46 (m7G46) in tRNA. In Helicobacter acinonychis (strain Sheeba), this protein is tRNA (guanine-N(7)-)-methyltransferase.